Reading from the N-terminus, the 393-residue chain is NAD(P)H-quinone oxidoreductase subunit H, chloroplastic (393 aa).

It belongs to the complex I 49 kDa subunit family. In terms of assembly, NDH is composed of at least 16 different subunits, 5 of which are encoded in the nucleus.

The protein localises to the plastid. The protein resides in the chloroplast thylakoid membrane. It carries out the reaction a plastoquinone + NADH + (n+1) H(+)(in) = a plastoquinol + NAD(+) + n H(+)(out). The enzyme catalyses a plastoquinone + NADPH + (n+1) H(+)(in) = a plastoquinol + NADP(+) + n H(+)(out). Functionally, NDH shuttles electrons from NAD(P)H:plastoquinone, via FMN and iron-sulfur (Fe-S) centers, to quinones in the photosynthetic chain and possibly in a chloroplast respiratory chain. The immediate electron acceptor for the enzyme in this species is believed to be plastoquinone. Couples the redox reaction to proton translocation, and thus conserves the redox energy in a proton gradient. The polypeptide is NAD(P)H-quinone oxidoreductase subunit H, chloroplastic (Solanum tuberosum (Potato)).